An 881-amino-acid chain; its full sequence is Armadillo repeat-containing protein 3 (881 aa).

12 ARM repeats span residues 15-54 (DVFD…KFAL), 57-96 (EENK…ILAS), 98-138 (SDVK…NMSV), 140-179 (YTGK…NLVQ), 181-220 (FQCR…VITC), 222-262 (KEAR…NCLE), 264-304 (MDTM…KAAY), 306-345 (PENR…ALCE), 346-385 (NLSC…NLTT), 388-427 (PANA…NMAT), 429-468 (EPLR…ATAC), and 470-509 (VEAR…VCAG). 2 S-palmitoyl cysteine lipidation sites follow: Cys507 and Cys518. The segment at 605–659 (NNKSDTSPPPSMEDKSSDVGYGRSISSSSSLRRGSKEKANAIFGSPTEEKSEPAS) is disordered. The segment covering 622–636 (DVGYGRSISSSSSLR) has biased composition (low complexity).

As to quaternary structure, homodimer. Interacts with PIK3C3, PIK3R4 and BECN1. Interacts (via ARM domains) with ATG14. In terms of processing, palmitoylation is important for its function in autophagy. In terms of tissue distribution, testis-specific.

Essential for male fertility and sperm motility. During spermatogenesis, promotes the autophagic degradation of excessive ribosomes, providing energy resources for mitochondria and thus ensuring sperm flagellar motility. The sequence is that of Armadillo repeat-containing protein 3 (Armc3) from Mus musculus (Mouse).